A 150-amino-acid polypeptide reads, in one-letter code: Large ribosomal subunit protein uL15 (150 aa).

A disordered region spans residues 1 to 57 (MTIKLESLQSNKGSRRKKMRKGRGIAAGQGASCGFGMRGQKSRSGRPTRPGFEGGQM). The span at 13–23 (GSRRKKMRKGR) shows a compositional bias: basic residues. A compositionally biased stretch (gly residues) spans 25-37 (IAAGQGASCGFGM).

It belongs to the universal ribosomal protein uL15 family. In terms of assembly, part of the 50S ribosomal subunit.

In terms of biological role, binds to the 23S rRNA. In Prochlorococcus marinus (strain NATL1A), this protein is Large ribosomal subunit protein uL15.